The primary structure comprises 1184 residues: Fibulin-2 (1184 aa).

The signal sequence occupies residues 1 to 27; it reads MVLLWEPAGAWLALGLALALGPSVAAA. The interval 28–177 is subdomain NA (Cys-rich); the sequence is APRQDCTGVE…ELICYQLPGC (150 aa). The interval 28 to 444 is n; that stretch reads APRQDCTGVE…EGSTKDLIET (417 aa). A subdomain NB (Cys-free) region spans residues 178–444; it reads HGNFSDAEEG…EGSTKDLIET (267 aa). N-linked (GlcNAc...) asparagine glycosylation occurs at Asn180. Disordered stretches follow at residues 221 to 293 and 399 to 437; these read VQAG…MAVT and IPPT…PEGS. Positions 224–236 are enriched in gly residues; the sequence is GAGGPPAALGGGS. Residues 252–261 show a composition bias toward low complexity; that stretch reads PRPTAAAALG. Acidic residues predominate over residues 276-288; the sequence is DSEEEEEEEEERE. Residue Ser277 is modified to Phosphoserine. The segment covering 423 to 436 has biased composition (polar residues); it reads PNSVHSIPRSSPEG. 38 disulfide bridges follow: Cys445–Cys472, Cys446–Cys479, Cys459–Cys480, Cys489–Cys518, Cys502–Cys519, Cys521–Cys545, Cys522–Cys552, Cys535–Cys553, Cys608–Cys620, Cys616–Cys629, Cys631–Cys644, Cys683–Cys693, Cys689–Cys702, Cys704–Cys717, Cys723–Cys736, Cys730–Cys745, Cys751–Cys762, Cys768–Cys781, Cys775–Cys790, Cys796–Cys808, Cys814–Cys827, Cys821–Cys836, Cys843–Cys856, Cys862–Cys875, Cys869–Cys884, Cys886–Cys899, Cys905–Cys917, Cys913–Cys926, Cys928–Cys941, Cys947–Cys956, Cys952–Cys965, Cys967–Cys980, Cys986–Cys998, Cys994–Cys1007, Cys1009–Cys1023, Cys1029–Cys1042, Cys1036–Cys1051, and Cys1056–Cys1068. Anaphylatoxin-like domains follow at residues 445–480, 488–519, and 521–553; these read CCAA…RHCC, SCMA…KQCC, and CCGL…LSCC. Asn507 carries an N-linked (GlcNAc...) asparagine glycan. The 42-residue stretch at 604–645 folds into the EGF-like 1; calcium-binding domain; that stretch reads DQDECLLLPGELCQHLCINTVGSYHCACFPGFSLQDDGRTCR. The region spanning 679–718 is the EGF-like 2 domain; it reads QPNTCKDNGPCKQVCSTVGGSAICSCFPGYAIMADGVSCE. One can recognise an EGF-like 3; calcium-binding domain in the interval 719–763; sequence DINECVTDLHTCSRGEHCVNTLGSFHCYKALTCEPGYALKDGECE. The EGF-like 4; calcium-binding domain occupies 764–809; it reads DVDECAMGTHTCQPGFLCQNTKGSFYCQARQRCMDGFLQDPEGNCV. The EGF-like 5; calcium-binding domain occupies 810 to 857; the sequence is DINECTSLSEPCRPGFSCINTVGSYTCQRNPLICARGYHASDDGTKCV. The EGF-like 6; calcium-binding domain occupies 858–900; the sequence is DVNECETGVHRCGEGQVCHNLPGSYRCDCKAGFQRDAFGRGCI. The 42-residue stretch at 901-942 folds into the EGF-like 7; calcium-binding domain; it reads DVNECWASPGRLCQHTCENTLGSYRCSCASGFLLAADGKRCE. The EGF-like 8; calcium-binding domain occupies 943 to 981; that stretch reads DVNECEAQRCSQECANIYGSYQCYCRQGYQLAEDGHTCT. The 43-residue stretch at 982–1024 folds into the EGF-like 9; calcium-binding domain; sequence DIDECAQGAGILCTFRCLNVPGSYQCACPEQGYTMTANGRSCK. Residues 1025-1069 form the EGF-like 10; calcium-binding domain; it reads DVDECALGTHNCSEAETCHNIQGSFRCLRFECPPNYVQVSKTKCE. Asn1035 is a glycosylation site (N-linked (GlcNAc...) asparagine). Residues 1070-1184 are domain III; sequence RTTCHDFLEC…MHIFFTTFAL (115 aa).

It belongs to the fibulin family. In terms of assembly, homotrimer; disulfide-linked. Interacts with LAMA2. Interacts with FBN1 (via N-terminal domain). Forms a ternary complex with ELN and FBN1. Post-translationally, O-glycosylated with core 1 or possibly core 8 glycans. It is unsure if the O-glycosylation is on Thr-347 or Ser-348. In terms of tissue distribution, component of both basement membranes and other connective tissues. Expressed in heart, placenta and ovary.

Its subcellular location is the secreted. The protein localises to the extracellular space. The protein resides in the extracellular matrix. Its binding to fibronectin and some other ligands is calcium dependent. May act as an adapter that mediates the interaction between FBN1 and ELN. The protein is Fibulin-2 (FBLN2) of Homo sapiens (Human).